A 657-amino-acid chain; its full sequence is Methionine--tRNA ligase (657 aa).

The 'HIGH' region signature appears at 13–23 (YYPSGNLHIGH). The short motif at 308-312 (KMSKS) is the 'KMSKS' region element. An ATP-binding site is contributed by lysine 311. The 101-residue stretch at 557-657 (DFDKVEIKAA…SAIPNGAVIK (101 aa)) folds into the tRNA-binding domain.

It belongs to the class-I aminoacyl-tRNA synthetase family. MetG type 2B subfamily. Homodimer.

The protein resides in the cytoplasm. It catalyses the reaction tRNA(Met) + L-methionine + ATP = L-methionyl-tRNA(Met) + AMP + diphosphate. In terms of biological role, is required not only for elongation of protein synthesis but also for the initiation of all mRNA translation through initiator tRNA(fMet) aminoacylation. This chain is Methionine--tRNA ligase, found in Staphylococcus aureus (strain MRSA252).